A 403-amino-acid polypeptide reads, in one-letter code: Palmitoyltransferase ZDHHC23-A (403 aa).

Over 1-70 the chain is Cytoplasmic; that stretch reads MKRERFKPPE…ADRLGVSCCT (70 aa). The chain crosses the membrane as a helical span at residues 71–91; it reads VGPLRLELSVLPPMVLIPGLL. A topological domain (lumenal) is located at residue Arg-92. The chain crosses the membrane as a helical span at residues 93–113; the sequence is VAAINCLLGVIILTALPLLVL. Topologically, residues 114-125 are cytoplasmic; that stretch reads WYYYMTHRRKRR. Residues 126–146 form a helical membrane-spanning segment; it reads TLFFLSLALFSLAYMYYLFLT. The Lumenal segment spans residues 147–153; the sequence is EIVPRGD. Residues 154-174 traverse the membrane as a helical segment; the sequence is VTHLQVVTATTGMMLTLISLV. At 175–268 the chain is on the cytoplasmic side; that stretch reads RTKQGPGFVK…NSCVGQANHR (94 aa). Residues 225–275 enclose the DHHC domain; the sequence is KKCPVCQLVRPPRAGHCRICGACVLRMDHHCVWINSCVGQANHRQFILTLL. Cys-255 acts as the S-palmitoyl cysteine intermediate in catalysis. A helical membrane pass occupies residues 269–289; it reads QFILTLLLFLLTSFYGISLVL. Over 290–319 the chain is Lumenal; it reads RSICPKQSLFTAMLYCPGVYNQYSTALCFT. The helical transmembrane segment at 320–340 threads the bilayer; it reads CVWYSVIITGGLLHLFILQII. Over 341–403 the chain is Cytoplasmic; the sequence is NVSCNVTERE…GSSLNLTDMV (63 aa).

The protein belongs to the DHHC palmitoyltransferase family.

The protein localises to the golgi apparatus membrane. Its subcellular location is the golgi apparatus. It is found in the trans-Golgi network membrane. It carries out the reaction L-cysteinyl-[protein] + hexadecanoyl-CoA = S-hexadecanoyl-L-cysteinyl-[protein] + CoA. Functionally, palmitoyltransferase that could catalyze the addition of palmitate onto various protein substrates and be involved in a variety of cellular processes. The polypeptide is Palmitoyltransferase ZDHHC23-A (zdhhc23a) (Danio rerio (Zebrafish)).